A 589-amino-acid polypeptide reads, in one-letter code: MTSLAKNLSAAAGAAFEAMGLEARFGEVRRSDKPELADFQCNGAMAAAKAAGKNPREIAGEIAARLKEHASVLSAEVAGPGFINLRVSDAALSARAEHVRGDAMAGAEKAADAAVTVIDFGGANVAKPMHVGHLRSAVIGDTLQRICRFAGDEVTSDVHLGDWGLQMGHLVTELYDEQPGLIYFDAAYTGPYPAEPPVTIDDLGRLYPQASNKAKADAARNERSQKAVAEMQAGRPGYRALLRHFIEVSIEALKLDYGFLNVSFDLWKGESDVDGLIPGLVERFKQAGLAEESDGALIVHVARETDKKEMPPVMLVNSRGGTGYHTTDLATILDRMDTLTTTPERMLYVVDQRQALHFEQVFRAAGMLGLIAEDKLEHIGFGTVNGADGKPFKTREGGVLRLADLQAMAMEEAEKKLSAANLPADMGDAERFDVAKKVAVAALRFSDLMNTRTTNYVFDLERFTSFEGKTGPYLMYAAVRVKSVLRKAAENGHSAGKVVVTEDAERTLVLQLDGFGAALLGAREKRMPHILCEHLYGLAQAFSSFYAALPIAAEADGEKRASRLALADGVRHQLETGLELLGIAVPERM.

The short motif at 123–133 (ANVAKPMHVGH) is the 'HIGH' region element.

It belongs to the class-I aminoacyl-tRNA synthetase family. In terms of assembly, monomer.

Its subcellular location is the cytoplasm. The catalysed reaction is tRNA(Arg) + L-arginine + ATP = L-arginyl-tRNA(Arg) + AMP + diphosphate. The polypeptide is Arginine--tRNA ligase (Hyphomonas neptunium (strain ATCC 15444)).